A 359-amino-acid polypeptide reads, in one-letter code: Peptide chain release factor 1 (359 aa).

Gln-235 is subject to N5-methylglutamine. Positions 287 to 312 are disordered; sequence AQEASAMRSAQVGSGDRSERIRTYNF.

The protein belongs to the prokaryotic/mitochondrial release factor family. Post-translationally, methylated by PrmC. Methylation increases the termination efficiency of RF1.

It is found in the cytoplasm. In terms of biological role, peptide chain release factor 1 directs the termination of translation in response to the peptide chain termination codons UAG and UAA. The polypeptide is Peptide chain release factor 1 (Chlamydia trachomatis serovar L2 (strain ATCC VR-902B / DSM 19102 / 434/Bu)).